Reading from the N-terminus, the 31-residue chain is Photosystem II reaction center protein T (31 aa).

A helical membrane pass occupies residues 3 to 23 (ALVYTFLLIGTLGIIFFAIFF).

Belongs to the PsbT family. PSII is composed of 1 copy each of membrane proteins PsbA, PsbB, PsbC, PsbD, PsbE, PsbF, PsbH, PsbI, PsbJ, PsbK, PsbL, PsbM, PsbT, PsbY, PsbZ, Psb30/Ycf12, at least 3 peripheral proteins of the oxygen-evolving complex and a large number of cofactors. It forms dimeric complexes.

The protein resides in the plastid. It localises to the chloroplast thylakoid membrane. In terms of biological role, found at the monomer-monomer interface of the photosystem II (PS II) dimer, plays a role in assembly and dimerization of PSII. PSII is a light-driven water plastoquinone oxidoreductase, using light energy to abstract electrons from H(2)O, generating a proton gradient subsequently used for ATP formation. This is Photosystem II reaction center protein T from Stigeoclonium helveticum (Green alga).